We begin with the raw amino-acid sequence, 85 residues long: Small ribosomal subunit protein bS18c (85 aa).

The protein belongs to the bacterial ribosomal protein bS18 family. In terms of assembly, part of the 30S ribosomal subunit.

It localises to the plastid. Its subcellular location is the chloroplast. This Zygnema circumcarinatum (Green alga) protein is Small ribosomal subunit protein bS18c.